The sequence spans 251 residues: MLAKRIIPCLDVRDGRVVKGINFEGLRDAGSILEQARFYNGELADELVFLDISASLESRKTTLGEVLKVSEEVFIPLTVGGGISSVERAHDAFMHGADKVSVNTAAIATPELISRIAEKFGSQAVVVAIDVKKVGNDYIVHTHSGKKPTQYEAMEWAHKVEKLGAGEILLTSMDRDGTKSGYDNVILKAISTSVNIPVIASGGAGNLEHLYQGFAEGHADAALAASIFHFRQYSIREAKTYLRERGIVVRL.

Residues D11 and D130 contribute to the active site.

The protein belongs to the HisA/HisF family. Heterodimer of HisH and HisF.

It localises to the cytoplasm. It carries out the reaction 5-[(5-phospho-1-deoxy-D-ribulos-1-ylimino)methylamino]-1-(5-phospho-beta-D-ribosyl)imidazole-4-carboxamide + L-glutamine = D-erythro-1-(imidazol-4-yl)glycerol 3-phosphate + 5-amino-1-(5-phospho-beta-D-ribosyl)imidazole-4-carboxamide + L-glutamate + H(+). It functions in the pathway amino-acid biosynthesis; L-histidine biosynthesis; L-histidine from 5-phospho-alpha-D-ribose 1-diphosphate: step 5/9. In terms of biological role, IGPS catalyzes the conversion of PRFAR and glutamine to IGP, AICAR and glutamate. The HisF subunit catalyzes the cyclization activity that produces IGP and AICAR from PRFAR using the ammonia provided by the HisH subunit. The polypeptide is Imidazole glycerol phosphate synthase subunit HisF (Prosthecochloris aestuarii (strain DSM 271 / SK 413)).